The following is a 765-amino-acid chain: Probable dipeptidyl peptidase 4 (765 aa).

The first 14 residues, 1 to 14, serve as a signal peptide directing secretion; that stretch reads MKWSILLLVGCAAA. N-linked (GlcNAc...) asparagine glycans are attached at residues Asn-35, Asn-78, Asn-101, Asn-110, Asn-169, Asn-218, Asn-465, and Asn-490. The active-site Charge relay system is Ser-613. Asn-665 is a glycosylation site (N-linked (GlcNAc...) asparagine). Catalysis depends on charge relay system residues Asp-690 and His-725.

It belongs to the peptidase S9B family.

It is found in the secreted. The enzyme catalyses Release of an N-terminal dipeptide, Xaa-Yaa-|-Zaa-, from a polypeptide, preferentially when Yaa is Pro, provided Zaa is neither Pro nor hydroxyproline.. Functionally, extracellular dipeptidyl-peptidase which removes N-terminal dipeptides sequentially from polypeptides having unsubstituted N-termini provided that the penultimate residue is proline. The protein is Probable dipeptidyl peptidase 4 (dpp4) of Neosartorya fischeri (strain ATCC 1020 / DSM 3700 / CBS 544.65 / FGSC A1164 / JCM 1740 / NRRL 181 / WB 181) (Aspergillus fischerianus).